Here is a 586-residue protein sequence, read N- to C-terminus: MKKSPSVLVIGGGSTGTGIARDLAMRGLDVTLVEKGNLTHGTTGRMHGLLHSGGRYAVSDQPSAKECIEENRVLRRIAGHCVEMTGGLFVQRPEDSDEYFEKKLEGCRECGIPAEVLSAEEAREIEPYLAKDIKRAIKVPDGAVDPFRLCVANAASAVEHGARIETHSEVTDVLVEGGEVVGVEVTHQTGTGPYVHGEPGEVEEIRADYVVNATGAWAGQIGDFAGVNVEVRPSKGVMTIMNTRQVDTVVNRCRPKGDADIIVPHETTCILGTTDEEVEDPEDYPEEGWEVDLMIETLSELVPMLADARTIRSFWGVRPLYEPPGTGTEDPTDITREFFLLDHADRDDLPGMTSIVGGKLTTYRMMAEQISDHVCEKLGVDAECRTADEPLPGSEDFTVLRDYMDDFGLRSPIGRRSAQRLGSRADEVLNSVDPNPVVCECEAVTRAEIQDALDTAGTDLNSVRIQTRASMGNCQGAICCHRMANELAPEYDEKTVRASLDDLYQERWKGERHAMWGTQLSQTALKHMLHAATMNRDEDPAAADADIDFAAFDDGVASGGAVADGGRERAADRADDDALGGADGDN.

An FAD-binding site is contributed by 6–34; the sequence is SVLVIGGGSTGTGIARDLAMRGLDVTLVE. The segment at 559–586 is disordered; the sequence is GGAVADGGRERAADRADDDALGGADGDN. The segment covering 574 to 586 has biased composition (acidic residues); the sequence is ADDDALGGADGDN.

This sequence belongs to the FAD-dependent glycerol-3-phosphate dehydrogenase family. In terms of assembly, composed of a catalytic GlpA/B dimer and of membrane bound GlpC. It depends on FAD as a cofactor. The cofactor is FMN.

Its subcellular location is the cell membrane. The catalysed reaction is a quinone + sn-glycerol 3-phosphate = dihydroxyacetone phosphate + a quinol. It functions in the pathway polyol metabolism; glycerol degradation via glycerol kinase pathway; glycerone phosphate from sn-glycerol 3-phosphate (anaerobic route): step 1/1. Up-regulated by glycerol and no inhibition by glucose. In terms of biological role, conversion of glycerol 3-phosphate to dihydroxyacetone phosphate. Required for growth on glycerol and for glycerol metabolism. The chain is Anaerobic glycerol-3-phosphate dehydrogenase subunit A1 (gpdA1) from Haloferax volcanii (strain ATCC 29605 / DSM 3757 / JCM 8879 / NBRC 14742 / NCIMB 2012 / VKM B-1768 / DS2) (Halobacterium volcanii).